The following is a 124-amino-acid chain: Small ribosomal subunit protein uS12 (124 aa).

Residue Asp-89 is modified to 3-methylthioaspartic acid. Residues 104–124 (TAGVKDRRQSRSKYGAKTPKE) form a disordered region.

The protein belongs to the universal ribosomal protein uS12 family. Part of the 30S ribosomal subunit. Contacts proteins S8 and S17. May interact with IF1 in the 30S initiation complex.

In terms of biological role, with S4 and S5 plays an important role in translational accuracy. Interacts with and stabilizes bases of the 16S rRNA that are involved in tRNA selection in the A site and with the mRNA backbone. Located at the interface of the 30S and 50S subunits, it traverses the body of the 30S subunit contacting proteins on the other side and probably holding the rRNA structure together. The combined cluster of proteins S8, S12 and S17 appears to hold together the shoulder and platform of the 30S subunit. This is Small ribosomal subunit protein uS12 from Parasynechococcus marenigrum (strain WH8102).